The sequence spans 432 residues: Adenosylhomocysteinase (432 aa).

Substrate is bound by residues Thr57, Asp131, and Glu156. Residue 157 to 159 (TTT) participates in NAD(+) binding. At Ser183 the chain carries Phosphoserine. Substrate is bound by residues Lys186 and Asp190. Lys186 bears the N6-(2-hydroxyisobutyryl)lysine mark. Tyr193 carries the post-translational modification Phosphotyrosine. NAD(+) is bound by residues 222-227 (GDVGKG), Glu243, Asn248, 299-301 (IGH), Asn346, His353, Lys426, 426-430 (KPDHY), and Tyr430.

This sequence belongs to the adenosylhomocysteinase family. In terms of assembly, homotetramer. Interaction with AHCYL1. NAD(+) is required as a cofactor.

The protein localises to the cytoplasm. Its subcellular location is the melanosome. The protein resides in the nucleus. It is found in the endoplasmic reticulum. The enzyme catalyses S-adenosyl-L-homocysteine + H2O = L-homocysteine + adenosine. It participates in amino-acid biosynthesis; L-homocysteine biosynthesis; L-homocysteine from S-adenosyl-L-homocysteine: step 1/1. Functionally, catalyzes the hydrolysis of S-adenosyl-L-homocysteine to form adenosine and homocysteine. Binds copper ions. The sequence is that of Adenosylhomocysteinase (Ahcy) from Rattus norvegicus (Rat).